Consider the following 90-residue polypeptide: Small ribosomal subunit protein uS17 (90 aa).

It belongs to the universal ribosomal protein uS17 family. Part of the 30S ribosomal subunit.

Functionally, one of the primary rRNA binding proteins, it binds specifically to the 5'-end of 16S ribosomal RNA. The polypeptide is Small ribosomal subunit protein uS17 (Methylobacillus flagellatus (strain ATCC 51484 / DSM 6875 / VKM B-1610 / KT)).